We begin with the raw amino-acid sequence, 633 residues long: Probable methyltransferase PMT17 (633 aa).

The Cytoplasmic portion of the chain corresponds to methionine 1–lysine 18. The helical; Signal-anchor for type II membrane protein transmembrane segment at leucine 19–glutamine 39 threads the bilayer. Residues alanine 40 to asparagine 633 lie on the Lumenal side of the membrane. The segment at leucine 50–alanine 71 is disordered. Residues serine 59–serine 70 show a composition bias toward low complexity. The N-linked (GlcNAc...) asparagine glycan is linked to asparagine 87.

It belongs to the methyltransferase superfamily.

The protein resides in the endoplasmic reticulum membrane. The protein is Probable methyltransferase PMT17 of Arabidopsis thaliana (Mouse-ear cress).